An 86-amino-acid chain; its full sequence is Colicin-E2 immunity protein (86 aa).

It belongs to the colicins ColE2/ColE8/ColE9 and pyocins S1/S2 family.

Its function is as follows. This protein is able to protect a cell, which harbors the plasmid ColE2 encoding colicin E2, against colicin E2. This chain is Colicin-E2 immunity protein (imm), found in Escherichia coli.